The following is a 427-amino-acid chain: 4-hydroxy-3-methylbut-2-en-1-yl diphosphate synthase (flavodoxin) (427 aa).

[4Fe-4S] cluster contacts are provided by C300, C303, C346, and E353.

It belongs to the IspG family. [4Fe-4S] cluster serves as cofactor.

The catalysed reaction is (2E)-4-hydroxy-3-methylbut-2-enyl diphosphate + oxidized [flavodoxin] + H2O + 2 H(+) = 2-C-methyl-D-erythritol 2,4-cyclic diphosphate + reduced [flavodoxin]. Its pathway is isoprenoid biosynthesis; isopentenyl diphosphate biosynthesis via DXP pathway; isopentenyl diphosphate from 1-deoxy-D-xylulose 5-phosphate: step 5/6. Functionally, converts 2C-methyl-D-erythritol 2,4-cyclodiphosphate (ME-2,4cPP) into 1-hydroxy-2-methyl-2-(E)-butenyl 4-diphosphate. This Chromobacterium violaceum (strain ATCC 12472 / DSM 30191 / JCM 1249 / CCUG 213 / NBRC 12614 / NCIMB 9131 / NCTC 9757 / MK) protein is 4-hydroxy-3-methylbut-2-en-1-yl diphosphate synthase (flavodoxin).